The primary structure comprises 1202 residues: DNA-directed RNA polymerase subunit beta (1202 aa).

Positions 1154–1202 are disordered; that stretch reads NMDEDDDEVVNVDALAKYAEEHKADDKKNEEENKSEATSTTTDDKTNQN. The span at 1171–1188 shows a compositional bias: basic and acidic residues; it reads YAEEHKADDKKNEEENKS.

Belongs to the RNA polymerase beta chain family. As to quaternary structure, the RNAP catalytic core consists of 2 alpha, 1 beta, 1 beta' and 1 omega subunit. When a sigma factor is associated with the core the holoenzyme is formed, which can initiate transcription.

The catalysed reaction is RNA(n) + a ribonucleoside 5'-triphosphate = RNA(n+1) + diphosphate. DNA-dependent RNA polymerase catalyzes the transcription of DNA into RNA using the four ribonucleoside triphosphates as substrates. The protein is DNA-directed RNA polymerase subunit beta of Limosilactobacillus reuteri (strain DSM 20016) (Lactobacillus reuteri).